The following is a 434-amino-acid chain: Methylenetetrahydrofolate--tRNA-(uracil-5-)-methyltransferase TrmFO (434 aa).

FAD is bound at residue 9 to 14 (GAGLAG).

Belongs to the MnmG family. TrmFO subfamily. The cofactor is FAD.

Its subcellular location is the cytoplasm. The catalysed reaction is uridine(54) in tRNA + (6R)-5,10-methylene-5,6,7,8-tetrahydrofolate + NADH + H(+) = 5-methyluridine(54) in tRNA + (6S)-5,6,7,8-tetrahydrofolate + NAD(+). It catalyses the reaction uridine(54) in tRNA + (6R)-5,10-methylene-5,6,7,8-tetrahydrofolate + NADPH + H(+) = 5-methyluridine(54) in tRNA + (6S)-5,6,7,8-tetrahydrofolate + NADP(+). Functionally, catalyzes the folate-dependent formation of 5-methyl-uridine at position 54 (M-5-U54) in all tRNAs. This Bacillus licheniformis (strain ATCC 14580 / DSM 13 / JCM 2505 / CCUG 7422 / NBRC 12200 / NCIMB 9375 / NCTC 10341 / NRRL NRS-1264 / Gibson 46) protein is Methylenetetrahydrofolate--tRNA-(uracil-5-)-methyltransferase TrmFO.